Consider the following 462-residue polypeptide: MTRFSLTVLAVLAACFGSNIRPNVATLEPKTVCYYESWVHWRQGEGKMDPEDIDTSLCTHIVYSYFGIDAATHEIKLLDEYLMKDLHDMEHFTQHKGNAKAMIAVGGSTMSDQFSKTAAVEHYRETFVVSTVDLMTRYGFDGVMIDWSGMQAKDSDNFIKLLDKFDEKFAHTSFVMGVTLPATIASYDNYNIPAISNYVDFMNVLSLDYTGSWAHTVGHASPFPEQLKTLEAYHKRGAPRHKMVMAVPFYARTWILEKMNKQDIGDKASGPGPRGQFTQTDGFLSYNELCVQIQAETNAFTITRDHDNTAIYAVYVHSNHAEWISFEDRHTLGEKAKNITQQGYAGMSVYTLSNEDVHGVCGDKNPLLHAIQSNYYHGVVTEPTVVTLPPVTHTTEHVTDIPGVFHCHEEGFFRDKTYCATYYECKKGDFGLEKTVHHCANHLQAFDEVSRTCIDHTKIPGC.

The first 25 residues, 1–25 (MTRFSLTVLAVLAACFGSNIRPNVA), serve as a signal peptide directing secretion. The 350-residue stretch at 29-378 (PKTVCYYESW…HAIQSNYYHG (350 aa)) folds into the GH18 domain. An intrachain disulfide couples Cys-33 to Cys-58. Asn-338 is a glycosylation site (N-linked (GlcNAc...) asparagine). One can recognise a Chitin-binding type-2 domain in the interval 404-462 (VFHCHEEGFFRDKTYCATYYECKKGDFGLEKTVHHCANHLQAFDEVSRTCIDHTKIPGC). A disulfide bridge links Cys-439 with Cys-453.

Belongs to the glycosyl hydrolase 18 family. Chitinase class II subfamily. As to expression, expressed in the upper digestive tract. Staining is observed in the ventriculus, and in very rare individuals, also in the intestine or esophagus. No expression in fecal pellets neither inside the rectum nor defecated outside of the body.

It is found in the secreted. In terms of biological role, probably a non-catalytic chitinase-like protein, which binds to insoluble chitin and enhances the activity of the catalytic chitinases. Has weak chitin-binding activity. The protein is Chitinase-like mite allergen Der f 18.0101 of Dermatophagoides farinae (American house dust mite).